Reading from the N-terminus, the 362-residue chain is MRPLRHAVGSSTVTLETDLTLFPEDLHAPLLGSAGNATVDELALAARFDGLHQLLYTRGGVRPTNAAIEEVGKLLLLRLWLSRDDEASVDGVGLRALFDGAVPDESVVEVTKKAFTQVLTVDRMSLRAVDGSSRPLWPYDEPFRLAEPTVLQSALALVNEILGGGTRVADPLGTAFDAFLSGRYDHSGGLGTYLTPSSVARMMAEVVLDLLSSDALADVRAPIIADPFCGTGRFLVAAFDAAEERHENVDLAGLLDGGLVGADQSTTAIAKSGLNLLLYGAQQPEVYAVADSMTDPGLDRLRGTLAAVLTNPPFGGGKYDDALGIDRTRELFPSVRPNRPMDPRLLDSRCLSNFCDPGESLG.

Belongs to the N(4)/N(6)-methyltransferase family.

The enzyme catalyses a 2'-deoxyadenosine in DNA + S-adenosyl-L-methionine = an N(6)-methyl-2'-deoxyadenosine in DNA + S-adenosyl-L-homocysteine + H(+). Functionally, a gamma subtype methylase that recognizes the double-stranded sequence 5'-GATNNNNATC-3', methylates A-? on both strands, and protects the DNA from cleavage by the MamI endonuclease. The polypeptide is Type II methyltransferase M.MamI (Microbacterium ammoniaphilum).